We begin with the raw amino-acid sequence, 883 residues long: Phosphoenolpyruvate carboxylase (883 aa).

Residues His138 and Lys546 contribute to the active site.

This sequence belongs to the PEPCase type 1 family. The cofactor is Mg(2+).

The catalysed reaction is oxaloacetate + phosphate = phosphoenolpyruvate + hydrogencarbonate. Forms oxaloacetate, a four-carbon dicarboxylic acid source for the tricarboxylic acid cycle. This is Phosphoenolpyruvate carboxylase from Escherichia coli O81 (strain ED1a).